The chain runs to 293 residues: DNA-directed RNA polymerase III subunit RPC6 (293 aa).

The protein belongs to the eukaryotic RPC34/RPC39 RNA polymerase subunit family. Component of the RNA polymerase III (Pol III) complex consisting of 17 subunits.

The protein resides in the nucleus. Its function is as follows. DNA-dependent RNA polymerase catalyzes the transcription of DNA into RNA using the four ribonucleoside triphosphates as substrates. Specific peripheric component of RNA polymerase III which synthesizes small RNAs, such as 5S rRNA and tRNAs. The protein is DNA-directed RNA polymerase III subunit RPC6 of Drosophila melanogaster (Fruit fly).